The sequence spans 122 residues: Autophagy-related protein 8e (122 aa).

Residue Gly118 is the site of Phosphatidylethanolamine amidated glycine attachment. The propeptide at 119–122 (ASSI) is removed in mature form.

This sequence belongs to the ATG8 family. In terms of assembly, interacts with ATG4. Interacts with SH3P2. Interacts with ATG1A and ATG11. Binds to ATG1A and ATG11 on autophagic vesicles. In terms of processing, the C-terminal 4 residues are removed by ATG4 to expose Gly-118 at the C-terminus. This Gly-118 forms then a thioester bond with the 'Cys-558' of ATG7 (E1-like activating enzyme) before being transferred to the 'Cys-258' of ATG3 (the specific E2 conjugating enzyme), in order to be finally amidated with phosphatidylethanolamine. This lipid modification anchors ATG8 to autophagosomes. As to expression, constitutively expressed.

Its subcellular location is the cytoplasmic vesicle. It is found in the autophagosome membrane. It localises to the vacuole membrane. The protein localises to the cytoplasm. The protein resides in the cytoskeleton. Its function is as follows. Ubiquitin-like modifier involved in autophagosomes formation. May mediate the delivery of the autophagosomes to the vacuole via the microtubule cytoskeleton. This is Autophagy-related protein 8e (ATG8E) from Arabidopsis thaliana (Mouse-ear cress).